A 161-amino-acid polypeptide reads, in one-letter code: Phosphopantetheine adenylyltransferase (161 aa).

T11 is a binding site for substrate. ATP contacts are provided by residues 11-12 and H19; that span reads TF. Substrate is bound by residues K43, T75, and R89. ATP contacts are provided by residues 90 to 92, E100, and 125 to 131; these read GLR and YSFLSSS.

Belongs to the bacterial CoaD family. As to quaternary structure, homohexamer. Requires Mg(2+) as cofactor.

Its subcellular location is the cytoplasm. The catalysed reaction is (R)-4'-phosphopantetheine + ATP + H(+) = 3'-dephospho-CoA + diphosphate. The protein operates within cofactor biosynthesis; coenzyme A biosynthesis; CoA from (R)-pantothenate: step 4/5. Functionally, reversibly transfers an adenylyl group from ATP to 4'-phosphopantetheine, yielding dephospho-CoA (dPCoA) and pyrophosphate. The protein is Phosphopantetheine adenylyltransferase of Listeria innocua serovar 6a (strain ATCC BAA-680 / CLIP 11262).